The primary structure comprises 88 residues: Small ribosomal subunit protein bS20 (88 aa).

Positions 1–28 are disordered; it reads MANIKSQIKRNKTNEKARLRNKAVKSSL.

It belongs to the bacterial ribosomal protein bS20 family.

In terms of biological role, binds directly to 16S ribosomal RNA. This Streptomyces avermitilis (strain ATCC 31267 / DSM 46492 / JCM 5070 / NBRC 14893 / NCIMB 12804 / NRRL 8165 / MA-4680) protein is Small ribosomal subunit protein bS20.